Reading from the N-terminus, the 324-residue chain is NAD kinase (324 aa).

Aspartate 89 acts as the Proton acceptor in catalysis. Residues 89 to 90, arginine 94, 163 to 164, aspartate 193, and 204 to 209 each bind NAD(+); these read DG, NE, and TAYAFS.

It belongs to the NAD kinase family. The cofactor is a divalent metal cation.

The protein resides in the cytoplasm. The catalysed reaction is NAD(+) + ATP = ADP + NADP(+) + H(+). Functionally, involved in the regulation of the intracellular balance of NAD and NADP, and is a key enzyme in the biosynthesis of NADP. Catalyzes specifically the phosphorylation on 2'-hydroxyl of the adenosine moiety of NAD to yield NADP. This Nocardia farcinica (strain IFM 10152) protein is NAD kinase.